The sequence spans 167 residues: Putative C-type lectin-like domain family 1 (167 aa).

Topologically, residues 1–67 are cytoplasmic; sequence MVSNFFHVIQ…KYDCPFSGTS (67 aa). The chain crosses the membrane as a helical; Signal-anchor for type II membrane protein span at residues 68 to 88; it reads FVVFSLFLICAMAGDVVYADI. Over 89–167 the chain is Extracellular; that stretch reads KTVRTSPLEL…DITAMVRFNI (79 aa). N-linked (GlcNAc...) asparagine glycans are attached at residues asparagine 109, asparagine 140, and asparagine 149. The C-type lectin; atypical domain occupies 116–167; that stretch reads SCPAKDWKVHKGKCYWIAETKKSWNKSQNDCAINNSYLMVIQDITAMVRFNI.

As to expression, expressed in spleen, lymph node, and tonsil. Lower expression in peripheral blood, bone marrow, and colon. No expression detected in thymus. Highly expressed in dendritic and B-cells.

The protein resides in the cell membrane. Its function is as follows. May function in mediating immune cell-cell interactions. May act as a T-cell costimulatory molecule, enhancing anti-CD3-induced proliferation. May play a role in the interaction of dendritic cells with T-cells and the cells of the adaptive immune response. The protein is Putative C-type lectin-like domain family 1 of Homo sapiens (Human).